Consider the following 101-residue polypeptide: Large ribosomal subunit protein bL21 (101 aa).

Belongs to the bacterial ribosomal protein bL21 family. As to quaternary structure, part of the 50S ribosomal subunit. Contacts protein L20.

In terms of biological role, this protein binds to 23S rRNA in the presence of protein L20. In Thermus thermophilus (strain ATCC BAA-163 / DSM 7039 / HB27), this protein is Large ribosomal subunit protein bL21.